A 195-amino-acid polypeptide reads, in one-letter code: Imidazoleglycerol-phosphate dehydratase (195 aa).

This sequence belongs to the imidazoleglycerol-phosphate dehydratase family.

The protein localises to the cytoplasm. It carries out the reaction D-erythro-1-(imidazol-4-yl)glycerol 3-phosphate = 3-(imidazol-4-yl)-2-oxopropyl phosphate + H2O. The protein operates within amino-acid biosynthesis; L-histidine biosynthesis; L-histidine from 5-phospho-alpha-D-ribose 1-diphosphate: step 6/9. This chain is Imidazoleglycerol-phosphate dehydratase, found in Pelobacter propionicus (strain DSM 2379 / NBRC 103807 / OttBd1).